A 248-amino-acid chain; its full sequence is Fasciclin-like arabinogalactan protein 19 (248 aa).

An N-terminal signal peptide occupies residues 1 to 29; sequence MAKISSASCFRAIFLGALIILCLPHPSTG. An FAS1 domain is found at 35–166; that stretch reads LERAIAILRV…IAVHGLADLL (132 aa). Residues asparagine 114 and asparagine 136 are each glycosylated (N-linked (GlcNAc...) asparagine). Positions 213-226 are enriched in low complexity; it reads SPSVEEVSPSPSWG. The tract at residues 213–248 is disordered; it reads SPSVEEVSPSPSWGEGEEDFIVGDEGGPLDGRNNGF.

This sequence belongs to the fasciclin-like AGP family.

The protein localises to the secreted. Its function is as follows. May be a cell surface adhesion protein. The sequence is that of Fasciclin-like arabinogalactan protein 19 (FLA19) from Arabidopsis thaliana (Mouse-ear cress).